The primary structure comprises 248 residues: MALLEICCYSMECALTAQRNGADRIELCAAPKEGGLTPSLGVLRSVREHITIPVHPIIRPRGGDFYYTDGEFAAMLEDIRLVRELGFPGLVTGVLTVDGDVDMSRMEKIMAAAGPLAVTFHRAFDMCANPFNALKNLADAGVARVLTSGQKADAAQGLSIIMELIAQGDAPTIMAGAGVRANNLQNFLDAGVREVHSSAGVLLPSPMRYRNQGLSMSADIQADEYSRYRVEGAAVAEMKGIIVRHQAK.

The protein belongs to the CutC family. In terms of assembly, homodimer.

The protein resides in the cytoplasm. This chain is PF03932 family protein CutC, found in Salmonella enteritidis PT4 (strain P125109).